Reading from the N-terminus, the 465-residue chain is Ribulose bisphosphate carboxylase large chain (465 aa).

At Lys4 the chain carries N6,N6,N6-trimethyllysine. The substrate site is built by Asn113 and Thr163. Lys165 acts as the Proton acceptor in catalysis. Position 167 (Lys167) interacts with substrate. Residues Lys191, Asp193, and Glu194 each contribute to the Mg(2+) site. Lys191 is modified (N6-carboxylysine). Residue His284 is the Proton acceptor of the active site. Positions 285, 317, and 369 each coordinate substrate.

This sequence belongs to the RuBisCO large chain family. Type I subfamily. In terms of assembly, heterohexadecamer of 8 large chains and 8 small chains; disulfide-linked. The disulfide link is formed within the large subunit homodimers. Requires Mg(2+) as cofactor. The disulfide bond which can form in the large chain dimeric partners within the hexadecamer appears to be associated with oxidative stress and protein turnover.

The protein localises to the plastid. It is found in the chloroplast. The enzyme catalyses 2 (2R)-3-phosphoglycerate + 2 H(+) = D-ribulose 1,5-bisphosphate + CO2 + H2O. It carries out the reaction D-ribulose 1,5-bisphosphate + O2 = 2-phosphoglycolate + (2R)-3-phosphoglycerate + 2 H(+). RuBisCO catalyzes two reactions: the carboxylation of D-ribulose 1,5-bisphosphate, the primary event in carbon dioxide fixation, as well as the oxidative fragmentation of the pentose substrate in the photorespiration process. Both reactions occur simultaneously and in competition at the same active site. The chain is Ribulose bisphosphate carboxylase large chain from Ulmus alata (Winged elm).